The sequence spans 654 residues: Bifunctional 3'-phosphoadenosine 5'-phosphosulfate synthase pps-1 (654 aa).

The segment at 1–26 is disordered; it reads MLTPRDENNEGDAMPMLKKPRYSSLS. The tract at residues 1–231 is adenylyl-sulfate kinase; that stretch reads MLTPRDENNE…VLDHLESKGL (231 aa). 66–71 is an ATP binding site; sequence GAGKTT. Adenosine 5'-phosphosulfate-binding positions include 93–96, Phe105, 110–113, 136–137, Lys175, and 190–191; these read DNIR, RQEN, IS, and GF. Residues Cys218, 449-452, 550-554, and Ala592 each bind ATP; these read QLRN and GRDPA. Residues 242–653 are sulfate adenylyltransferase; it reads VRELFVSDDL…AGYYKSLQNS (412 aa).

This sequence in the N-terminal section; belongs to the APS kinase family. It in the C-terminal section; belongs to the sulfate adenylyltransferase family.

It is found in the nucleus. The catalysed reaction is sulfate + ATP + H(+) = adenosine 5'-phosphosulfate + diphosphate. It carries out the reaction adenosine 5'-phosphosulfate + ATP = 3'-phosphoadenylyl sulfate + ADP + H(+). The protein operates within sulfur metabolism; sulfate assimilation. In terms of biological role, bifunctional enzyme with both ATP sulfurylase and APS kinase activity, which mediates two steps in the sulfate activation pathway. The first step is the transfer of a sulfate group to ATP to yield adenosine 5'-phosphosulfate (APS), and the second step is the transfer of a phosphate group from ATP to APS yielding 3'-phosphoadenylylsulfate (PAPS: activated sulfate donor used by sulfotransferase). Required for normal growth and development. Involved in several aspects of both embryonic and postembryonic development, including molting, changes in cell shape, and patterning of epithelial and muscle cells. This Caenorhabditis elegans protein is Bifunctional 3'-phosphoadenosine 5'-phosphosulfate synthase pps-1.